A 114-amino-acid polypeptide reads, in one-letter code: Kita-kyushu lung cancer antigen 1 homolog (114 aa).

Over 1–4 the chain is Cytoplasmic; that stretch reads MNVY. A helical; Signal-anchor for type II membrane protein transmembrane segment spans residues 5-22; that stretch reads LLLASGILCALMTVFWKY. Topologically, residues 23-114 are extracellular; sequence RRFQRNTGEM…RSASAHRKST (92 aa). The N-linked (GlcNAc...) asparagine glycan is linked to Asn-84.

Its subcellular location is the cell membrane. The protein is Kita-kyushu lung cancer antigen 1 homolog (CT83) of Macaca fascicularis (Crab-eating macaque).